Here is a 167-residue protein sequence, read N- to C-terminus: Mediator of RNA polymerase II transcription subunit 10 (167 aa).

Residues 53–88 (LSTHTKPQPPSQDEEQKEKQDDTPEGSANDPLLRDI) are disordered.

Belongs to the Mediator complex subunit 10 family. As to quaternary structure, component of the Mediator complex.

The protein localises to the nucleus. Functionally, component of the Mediator complex, a coactivator involved in the regulated transcription of nearly all RNA polymerase II-dependent genes. Mediator functions as a bridge to convey information from gene-specific regulatory proteins to the basal RNA polymerase II transcription machinery. Mediator is recruited to promoters by direct interactions with regulatory proteins and serves as a scaffold for the assembly of a functional preinitiation complex with RNA polymerase II and the general transcription factors. The chain is Mediator of RNA polymerase II transcription subunit 10 (nut2) from Neosartorya fischeri (strain ATCC 1020 / DSM 3700 / CBS 544.65 / FGSC A1164 / JCM 1740 / NRRL 181 / WB 181) (Aspergillus fischerianus).